The sequence spans 488 residues: Alpha,alpha-trehalose-phosphate synthase [UDP-forming] 56 kDa subunit (488 aa).

D-glucose 6-phosphate is bound by residues Tyr102 and Asp156. Arg293 and Lys298 together coordinate UDP. UDP-alpha-D-glucose is bound by residues Arg293 and Lys298. Arg331 contacts D-glucose 6-phosphate. Residues Ile370 and 396–400 (LVSYE) each bind UDP. UDP-alpha-D-glucose is bound by residues Ile370 and 392 to 400 (DGMNLVSYE).

Belongs to the glycosyltransferase 20 family. As to quaternary structure, trehalose synthase/phosphatase complex contains three or four polypeptides of 56 kDa (TPS1), 102 kDa (TPS2), 115 kDa (TPS3) and 123 kDa (TSL1).

It catalyses the reaction D-glucose 6-phosphate + UDP-alpha-D-glucose = alpha,alpha-trehalose 6-phosphate + UDP + H(+). Its pathway is carbohydrate biosynthesis. In terms of biological role, synthase catalytic subunit of the trehalose synthase complex that catalyzes the production of trehalose from glucose-6-phosphate and UDP-alpha-D-glucose in a two step process. Can function independently of the complex. This Kluyveromyces lactis (strain ATCC 8585 / CBS 2359 / DSM 70799 / NBRC 1267 / NRRL Y-1140 / WM37) (Yeast) protein is Alpha,alpha-trehalose-phosphate synthase [UDP-forming] 56 kDa subunit.